A 516-amino-acid chain; its full sequence is Putative fatty acyl-CoA reductase CG8306 (516 aa).

3 helical membrane passes run tryptophan 356 to valine 376, isoleucine 471 to isoleucine 491, and glycine 496 to leucine 516.

It belongs to the fatty acyl-CoA reductase family.

It localises to the membrane. It carries out the reaction a long-chain fatty acyl-CoA + 2 NADPH + 2 H(+) = a long-chain primary fatty alcohol + 2 NADP(+) + CoA. Functionally, catalyzes the reduction of C16 or C18 fatty acyl-CoA to fatty alcohols. This is Putative fatty acyl-CoA reductase CG8306 from Drosophila melanogaster (Fruit fly).